Consider the following 187-residue polypeptide: Peptidyl-tRNA hydrolase (187 aa).

Phe-14 is a binding site for tRNA. His-19 serves as the catalytic Proton acceptor. Residues Tyr-64, Asn-66, and Asn-112 each coordinate tRNA.

Belongs to the PTH family. As to quaternary structure, monomer.

The protein resides in the cytoplasm. The enzyme catalyses an N-acyl-L-alpha-aminoacyl-tRNA + H2O = an N-acyl-L-amino acid + a tRNA + H(+). Hydrolyzes ribosome-free peptidyl-tRNAs (with 1 or more amino acids incorporated), which drop off the ribosome during protein synthesis, or as a result of ribosome stalling. Functionally, catalyzes the release of premature peptidyl moieties from peptidyl-tRNA molecules trapped in stalled 50S ribosomal subunits, and thus maintains levels of free tRNAs and 50S ribosomes. This Oceanobacillus iheyensis (strain DSM 14371 / CIP 107618 / JCM 11309 / KCTC 3954 / HTE831) protein is Peptidyl-tRNA hydrolase.